Here is a 213-residue protein sequence, read N- to C-terminus: Glycerol-3-phosphate acyltransferase (213 aa).

The next 6 helical transmembrane spans lie at 2–22, 52–74, 81–100, 112–132, 143–163, and 164–184; these read ITIV…GLWI, AGMA…PIIF, PLIF…FAGF, VIFG…FGAL, VTAS…GFIL, and SNYD…IIIR.

The protein belongs to the PlsY family. As to quaternary structure, probably interacts with PlsX.

The protein localises to the cell membrane. The enzyme catalyses an acyl phosphate + sn-glycerol 3-phosphate = a 1-acyl-sn-glycero-3-phosphate + phosphate. It functions in the pathway lipid metabolism; phospholipid metabolism. Functionally, catalyzes the transfer of an acyl group from acyl-phosphate (acyl-PO(4)) to glycerol-3-phosphate (G3P) to form lysophosphatidic acid (LPA). This enzyme utilizes acyl-phosphate as fatty acyl donor, but not acyl-CoA or acyl-ACP. The protein is Glycerol-3-phosphate acyltransferase of Streptococcus pneumoniae (strain ATCC 700669 / Spain 23F-1).